Consider the following 209-residue polypeptide: Thymidylate kinase (209 aa).

Gly-10–Ser-17 serves as a coordination point for ATP.

Belongs to the thymidylate kinase family.

The enzyme catalyses dTMP + ATP = dTDP + ADP. In terms of biological role, phosphorylation of dTMP to form dTDP in both de novo and salvage pathways of dTTP synthesis. The polypeptide is Thymidylate kinase (Photobacterium profundum (strain SS9)).